A 78-amino-acid chain; its full sequence is Large ribosomal subunit protein bL28 (78 aa).

Residues 1–25 (MSRVCQVTGKRPTVGNNRSHAKNAT) form a disordered region.

The protein belongs to the bacterial ribosomal protein bL28 family.

In Tolumonas auensis (strain DSM 9187 / NBRC 110442 / TA 4), this protein is Large ribosomal subunit protein bL28.